Consider the following 676-residue polypeptide: Multisubstrate pseudouridine synthase 7 (676 aa).

Disordered stretches follow at residues 1-27 (MSDS…AKKL) and 87-110 (KMPK…AARR). Residue Ser2 is modified to N-acetylserine. Over residues 94-110 (RSKEEVNAEKESEAARR) the composition is skewed to basic and acidic residues. Asp256 serves as the catalytic Nucleophile. Positions 338 to 582 (GFINYFGMQR…AGSYRTVIQK (245 aa)) constitute a TRUD domain.

The protein belongs to the pseudouridine synthase TruD family.

It localises to the nucleus. The protein localises to the cytoplasm. It catalyses the reaction uridine in 5S rRNA = pseudouridine in 5S rRNA. The enzyme catalyses uridine in snRNA = pseudouridine in snRNA. It carries out the reaction uridine(13) in tRNA = pseudouridine(13) in tRNA. The catalysed reaction is a uridine in mRNA = a pseudouridine in mRNA. Functionally, catalyzes pseudouridylation at position 35 in U2 snRNA stem-loop II region which induces particular conformation of the mRNA-U2 snRNA duplex and places the nucleophile in an accessible position for the first step of splicing. Also catalyzes pseudouridylation at position 56 in U2 snRNA. Also catalyzes pseudouridylation at position 50 in 5S rRNA, position 13 in cytoplasmic tRNAs, and position 35 in pre-tRNA(Tyr). Pseudouridine residues in tRNAs may stabilize the local RNA conformation, favor interactions with protein partners and play an important role in the stabilization of the codon-anticodon interaction with mRNA. Also catalyzes pseudouridylation of mRNAs in response to heat shock: mediates pseudouridylation of mRNAs with the consensus sequence 5'-UGUAR-3'. The protein is Multisubstrate pseudouridine synthase 7 of Saccharomyces cerevisiae (strain ATCC 204508 / S288c) (Baker's yeast).